The primary structure comprises 137 residues: Phosphomevalonate dehydratase small subunit (137 aa).

Ser65 (proton acceptor) is an active-site residue.

It belongs to the AcnX type II small subunit family. As to quaternary structure, heterodimer composed of a large subunit (PMDh-L) and a small subunit (PMDh-S).

It carries out the reaction (R)-5-phosphomevalonate = (2E)-3-methyl-5-phosphooxypent-2-enoate + H2O. It participates in isoprenoid biosynthesis; isopentenyl diphosphate biosynthesis via mevalonate pathway. In terms of biological role, component of a hydro-lyase that catalyzes the dehydration of mevalonate 5-phosphate (MVA5P) to form trans-anhydromevalonate 5-phosphate (tAHMP). Involved in the archaeal mevalonate (MVA) pathway, which provides fundamental precursors for isoprenoid biosynthesis, such as isopentenyl diphosphate (IPP) and dimethylallyl diphosphate (DMAPP). The sequence is that of Phosphomevalonate dehydratase small subunit from Methanococcoides burtonii (strain DSM 6242 / NBRC 107633 / OCM 468 / ACE-M).